The sequence spans 272 residues: Imidazole glycerol phosphate synthase subunit HisF (272 aa).

Active-site residues include Asp-12 and Asp-131.

This sequence belongs to the HisA/HisF family. Heterodimer of HisH and HisF.

Its subcellular location is the cytoplasm. The catalysed reaction is 5-[(5-phospho-1-deoxy-D-ribulos-1-ylimino)methylamino]-1-(5-phospho-beta-D-ribosyl)imidazole-4-carboxamide + L-glutamine = D-erythro-1-(imidazol-4-yl)glycerol 3-phosphate + 5-amino-1-(5-phospho-beta-D-ribosyl)imidazole-4-carboxamide + L-glutamate + H(+). Its pathway is amino-acid biosynthesis; L-histidine biosynthesis; L-histidine from 5-phospho-alpha-D-ribose 1-diphosphate: step 5/9. Functionally, IGPS catalyzes the conversion of PRFAR and glutamine to IGP, AICAR and glutamate. The HisF subunit catalyzes the cyclization activity that produces IGP and AICAR from PRFAR using the ammonia provided by the HisH subunit. This chain is Imidazole glycerol phosphate synthase subunit HisF, found in Methanopyrus kandleri (strain AV19 / DSM 6324 / JCM 9639 / NBRC 100938).